The primary structure comprises 395 residues: Phosphoserine aminotransferase (395 aa).

Thr-20 is subject to Phosphothreonine. Residue 80–81 (GT) coordinates pyridoxal 5'-phosphate. At Ser-112 the chain carries Phosphoserine. Residues Trp-113, Thr-170, Asp-194, and Gln-217 each coordinate pyridoxal 5'-phosphate. Lys-218 is modified (N6-(pyridoxal phosphate)lysine). Position 271–272 (271–272 (NT)) interacts with pyridoxal 5'-phosphate.

It belongs to the class-V pyridoxal-phosphate-dependent aminotransferase family. SerC subfamily. As to quaternary structure, homodimer. Requires pyridoxal 5'-phosphate as cofactor.

The catalysed reaction is O-phospho-L-serine + 2-oxoglutarate = 3-phosphooxypyruvate + L-glutamate. It carries out the reaction 4-(phosphooxy)-L-threonine + 2-oxoglutarate = (R)-3-hydroxy-2-oxo-4-phosphooxybutanoate + L-glutamate. Its pathway is amino-acid biosynthesis; L-serine biosynthesis; L-serine from 3-phospho-D-glycerate: step 2/3. In terms of biological role, phosphoserine aminotransferase (PSAT) is a pyridoxal 5'-phosphate-dependent enzyme involved in the second step of the phosphorylated pathway of serine biosynthesis. Catalyzes the reversible conversion of 3-phosphohydroxypyruvate to phosphoserine and of 3-hydroxy-2-oxo-4-phosphonooxybutanoate to phosphohydroxythreonine. Plays an indirect role in purine biosynthesis. This is Phosphoserine aminotransferase from Saccharomyces cerevisiae (strain ATCC 204508 / S288c) (Baker's yeast).